A 73-amino-acid polypeptide reads, in one-letter code: Large ribosomal subunit protein bL31 (73 aa).

Belongs to the bacterial ribosomal protein bL31 family. Type A subfamily. Part of the 50S ribosomal subunit.

Its function is as follows. Binds the 23S rRNA. This chain is Large ribosomal subunit protein bL31, found in Rhodospirillum centenum (strain ATCC 51521 / SW).